Consider the following 336-residue polypeptide: Eukaryotic translation initiation factor 3 subunit H (336 aa).

The MPN domain occupies 21–154 (VQCDGLAAMK…LKAYRLTPQA (134 aa)).

It belongs to the eIF-3 subunit H family. Component of the eukaryotic translation initiation factor 3 (eIF-3) complex.

The protein localises to the cytoplasm. Its function is as follows. Component of the eukaryotic translation initiation factor 3 (eIF-3) complex, which is involved in protein synthesis of a specialized repertoire of mRNAs and, together with other initiation factors, stimulates binding of mRNA and methionyl-tRNAi to the 40S ribosome. The eIF-3 complex specifically targets and initiates translation of a subset of mRNAs involved in cell proliferation. In Culex quinquefasciatus (Southern house mosquito), this protein is Eukaryotic translation initiation factor 3 subunit H.